Reading from the N-terminus, the 454-residue chain is tRNA modification GTPase MnmE (454 aa).

Arg23, Glu80, and Lys120 together coordinate (6S)-5-formyl-5,6,7,8-tetrahydrofolate. Residues 216-377 form the TrmE-type G domain; that stretch reads GMKVVIAGRP…LRDHLKQSMG (162 aa). Residue Asn226 participates in K(+) binding. GTP is bound by residues 226–231, 245–251, 270–273, 335–338, and 358–360; these read NAGKSS, TDIAGTT, DTAG, NKAD, and SAR. Ser230 is a binding site for Mg(2+). K(+) is bound by residues Thr245, Ile247, and Thr250. Thr251 contributes to the Mg(2+) binding site. Lys454 lines the (6S)-5-formyl-5,6,7,8-tetrahydrofolate pocket.

Belongs to the TRAFAC class TrmE-Era-EngA-EngB-Septin-like GTPase superfamily. TrmE GTPase family. As to quaternary structure, homodimer. Heterotetramer of two MnmE and two MnmG subunits. The cofactor is K(+).

It is found in the cytoplasm. Its function is as follows. Exhibits a very high intrinsic GTPase hydrolysis rate. Involved in the addition of a carboxymethylaminomethyl (cmnm) group at the wobble position (U34) of certain tRNAs, forming tRNA-cmnm(5)s(2)U34. In Serratia proteamaculans (strain 568), this protein is tRNA modification GTPase MnmE.